Reading from the N-terminus, the 276-residue chain is Glucosamine-6-phosphate deaminase 2 (276 aa).

The active-site Proton acceptor; for enolization step is the Asp72. Residues 103–131 (NAHILDGNAADLQAECDAFEEKIKEAGGI) adopt a coiled-coil conformation. Asp141 acts as the For ring-opening step in catalysis. Residue His143 is the Proton acceptor; for ring-opening step of the active site. The For ring-opening step role is filled by Glu148. Thr161 is modified (phosphothreonine).

The protein belongs to the glucosamine/galactosamine-6-phosphate isomerase family. As to quaternary structure, homohexamer.

The protein resides in the cytoplasm. It catalyses the reaction alpha-D-glucosamine 6-phosphate + H2O = beta-D-fructose 6-phosphate + NH4(+). Its pathway is nucleotide-sugar biosynthesis; UDP-N-acetyl-alpha-D-glucosamine biosynthesis; alpha-D-glucosamine 6-phosphate from D-fructose 6-phosphate: step 1/1. With respect to regulation, allosterically activated by N-acetylglucosamine-6-phosphate (GlcNAc6P). Catalyzes the reversible conversion of alpha-D-glucosamine 6-phosphate (GlcN-6P) into beta-D-fructose 6-phosphate (Fru-6P) and ammonium ion, a regulatory reaction step in de novo uridine diphosphate-N-acetyl-alpha-D-glucosamine (UDP-GlcNAc) biosynthesis via hexosamine pathway. Deamination is coupled to aldo-keto isomerization mediating the metabolic flux from UDP-GlcNAc toward Fru-6P. At high ammonium level can drive amination and isomerization of Fru-6P toward hexosamines and UDP-GlcNAc synthesis. Has a role in fine tuning the metabolic fluctuations of cytosolic UDP-GlcNAc and their effects on hyaluronan synthesis that occur during tissue remodeling. This chain is Glucosamine-6-phosphate deaminase 2, found in Mus musculus (Mouse).